The chain runs to 609 residues: D-apionate lactonase (609 aa).

The enzyme catalyses D-apionolactone + H2O = D-apionate + H(+). It functions in the pathway carbohydrate metabolism. Involved in catabolism of D-apiose. Hydrolyzes D-apionolactone to D-apionate. This is D-apionate lactonase from Brucella anthropi (strain ATCC 49188 / DSM 6882 / CCUG 24695 / JCM 21032 / LMG 3331 / NBRC 15819 / NCTC 12168 / Alc 37) (Ochrobactrum anthropi).